The primary structure comprises 219 residues: Leukocyte surface antigen CD53 (219 aa).

The Cytoplasmic portion of the chain corresponds to 2–11 (GMSSLKLLKY). The helical transmembrane segment at 12 to 32 (VLFFFNFLFWVCGCCILGFGI) threads the bilayer. Residues 33–54 (HLLVQNTYGILFRNLPFLTLGN) are Extracellular-facing. A helical transmembrane segment spans residues 55 to 69 (VLVIVGSIIMVVAFL). Residues 70–80 (GCMGSIKENKC) lie on the Cytoplasmic side of the membrane. A helical membrane pass occupies residues 81–106 (LLMSFFVLLLLILLAEVTLAILLFVY). The Extracellular portion of the chain corresponds to 107–181 (EKKINTLVAE…KKGQAWFHSN (75 aa)). N-linked (GlcNAc...) asparagine glycans are attached at residues asparagine 119, asparagine 129, and asparagine 148. The helical transmembrane segment at 182 to 206 (FLYIGIVTICVCVIQVLGMSFALTL) threads the bilayer. Residues 207-219 (NCQIDKTSQALGL) lie on the Cytoplasmic side of the membrane.

The protein belongs to the tetraspanin (TM4SF) family. In terms of assembly, interacts with SCIMP. Interacts with CD45/PTPRC. Interacts with IL7R. Interacts with RBL2 and PPP2CA. In terms of tissue distribution, spleen and thymus, B-cells, monocytes, macrophages, neutrophils, single (CD4 or CD8) positive thymocytes, peripheral T-cells.

Its subcellular location is the cell membrane. It localises to the cell junction. The protein localises to the membrane. Its function is as follows. Required for efficient formation of myofibers in regenerating muscle at the level of cell fusion. May be involved in growth regulation in hematopoietic cells. In Rattus norvegicus (Rat), this protein is Leukocyte surface antigen CD53 (Cd53).